We begin with the raw amino-acid sequence, 128 residues long: MSTLVSLPTAAPAPDYQSIDRPLNFSNAAAAKVRELIQEEGNAELALRVYIQGGGCSGFQYGFEFDENRAEDDLAVATDGVTLLVDPLSLQYLMGAEVDYTESLTGAQFVIRNPNAKTTCGCGSSFSV.

C56, C120, and C122 together coordinate iron-sulfur cluster.

This sequence belongs to the HesB/IscA family. As to quaternary structure, homodimer. Iron-sulfur cluster is required as a cofactor.

Required for insertion of 4Fe-4S clusters for at least IspG. This is Iron-sulfur cluster insertion protein ErpA from Xanthomonas campestris pv. campestris (strain 8004).